We begin with the raw amino-acid sequence, 614 residues long: ETS-related transcription factor Elf-1 (614 aa).

Phosphoserine is present on residues S110, S163, S167, and S168. Residues 159-199 (TYAHSPGPSSPEQPKRKKGRKTKPPRPDSPTTTPNISVKKK) form a disordered region. Over residues 173–182 (KRKKGRKTKP) the composition is skewed to basic residues. Residue S187 is modified to Phosphoserine. The residue at position 190 (T190) is a Phosphothreonine. Positions 208-290 (IYLWEFLLAL…EGQRLVYQFK (83 aa)) form a DNA-binding region, ETS. Residues 303-371 (DPSCSIESSD…VQPSEALRTV (69 aa)) are disordered. The span at 310–335 (SSDPSLSSTATSSRNPASRSRASSSP) shows a compositional bias: low complexity. S430 bears the Phosphoserine mark.

The protein belongs to the ETS family. As to quaternary structure, binds to the underphosphorylated form of RB. May interact with other transcription factors in order to regulate specific genes. Interacts with RUNX1.

It is found in the nucleus. Transcription factor that activates the LYN and BLK promoters. This chain is ETS-related transcription factor Elf-1 (ELF1), found in Bos taurus (Bovine).